Consider the following 347-residue polypeptide: NADH-ubiquinone oxidoreductase chain 2 (347 aa).

A run of 11 helical transmembrane segments spans residues 1–21 (MNPAIFTTIILTMILGTMIVT), 25–45 (HWLTVWIGFEMNMLAIIPILM), 59–79 (YFLTQATASMLLMLAITINLV), 96–116 (ITMTLAMAMKLGLSPFHFWVP), 127–147 (GLILLTWQKLAPMSILYQISP), 149–169 (INLELLLMMAILSIAIGGWGG), 178–198 (IMAYSSIAHMGWMTAIMAYNP), 201–221 (TLLNLXVYILLTTTXFMMLML), 240–260 (LATTILLIMLSLGGLPPLSGF), 274–294 (DSIIMPTIMAMAALLNLYFYM), and 326–346 (ISPLIILSTLXLPLSPMLTLL).

The protein belongs to the complex I subunit 2 family. Core subunit of respiratory chain NADH dehydrogenase (Complex I) which is composed of 45 different subunits. Interacts with TMEM242.

It is found in the mitochondrion inner membrane. It carries out the reaction a ubiquinone + NADH + 5 H(+)(in) = a ubiquinol + NAD(+) + 4 H(+)(out). Functionally, core subunit of the mitochondrial membrane respiratory chain NADH dehydrogenase (Complex I) which catalyzes electron transfer from NADH through the respiratory chain, using ubiquinone as an electron acceptor. Essential for the catalytic activity and assembly of complex I. This Dobsonia minor (Lesser bare-backed fruit bat) protein is NADH-ubiquinone oxidoreductase chain 2.